Reading from the N-terminus, the 174-residue chain is 3-hydroxydecanoyl-[acyl-carrier-protein] dehydratase (174 aa).

Histidine 71 is a catalytic residue.

This sequence belongs to the thioester dehydratase family. FabA subfamily. In terms of assembly, homodimer.

Its subcellular location is the cytoplasm. The catalysed reaction is a (3R)-hydroxyacyl-[ACP] = a (2E)-enoyl-[ACP] + H2O. It carries out the reaction (3R)-hydroxydecanoyl-[ACP] = (2E)-decenoyl-[ACP] + H2O. The enzyme catalyses (2E)-decenoyl-[ACP] = (3Z)-decenoyl-[ACP]. It participates in lipid metabolism; fatty acid biosynthesis. Its function is as follows. Necessary for the introduction of cis unsaturation into fatty acids. Catalyzes the dehydration of (3R)-3-hydroxydecanoyl-ACP to E-(2)-decenoyl-ACP and then its isomerization to Z-(3)-decenoyl-ACP. Can catalyze the dehydratase reaction for beta-hydroxyacyl-ACPs with saturated chain lengths up to 16:0, being most active on intermediate chain length. This Nitrobacter winogradskyi (strain ATCC 25391 / DSM 10237 / CIP 104748 / NCIMB 11846 / Nb-255) protein is 3-hydroxydecanoyl-[acyl-carrier-protein] dehydratase.